The sequence spans 618 residues: DNA mismatch repair protein MutL (618 aa).

Over residues 366–381 the composition is skewed to low complexity; that stretch reads AEPTAAREPATPRYSG. Residues 366–405 form a disordered region; it reads AEPTAAREPATPRYSGGTSGGNGGRQSAGGWPHAQPGYQK. Over residues 382–392 the composition is skewed to gly residues; sequence GTSGGNGGRQS.

Belongs to the DNA mismatch repair MutL/HexB family.

Its function is as follows. This protein is involved in the repair of mismatches in DNA. It is required for dam-dependent methyl-directed DNA mismatch repair. May act as a 'molecular matchmaker', a protein that promotes the formation of a stable complex between two or more DNA-binding proteins in an ATP-dependent manner without itself being part of a final effector complex. This chain is DNA mismatch repair protein MutL, found in Salmonella agona (strain SL483).